Reading from the N-terminus, the 426-residue chain is Glutamate-1-semialdehyde 2,1-aminomutase (426 aa).

K265 bears the N6-(pyridoxal phosphate)lysine mark.

The protein belongs to the class-III pyridoxal-phosphate-dependent aminotransferase family. HemL subfamily. In terms of assembly, homodimer. The cofactor is pyridoxal 5'-phosphate.

The protein resides in the cytoplasm. The enzyme catalyses (S)-4-amino-5-oxopentanoate = 5-aminolevulinate. The protein operates within porphyrin-containing compound metabolism; protoporphyrin-IX biosynthesis; 5-aminolevulinate from L-glutamyl-tRNA(Glu): step 2/2. This Pseudoalteromonas translucida (strain TAC 125) protein is Glutamate-1-semialdehyde 2,1-aminomutase.